The sequence spans 55 residues: Large ribosomal subunit protein bL32c (55 aa).

Residues 1-24 (MAVPKKRTSKSKKNARKANWKRKG) form a disordered region.

Belongs to the bacterial ribosomal protein bL32 family.

The protein localises to the plastid. Its subcellular location is the chloroplast. The chain is Large ribosomal subunit protein bL32c from Phaeodactylum tricornutum (strain CCAP 1055/1).